Consider the following 313-residue polypeptide: tRNA dimethylallyltransferase (313 aa).

20 to 27 lines the ATP pocket; sequence GPTGTGKS. A substrate-binding site is contributed by 22-27; sequence TGTGKS.

It belongs to the IPP transferase family. As to quaternary structure, monomer. Mg(2+) serves as cofactor.

It catalyses the reaction adenosine(37) in tRNA + dimethylallyl diphosphate = N(6)-dimethylallyladenosine(37) in tRNA + diphosphate. Functionally, catalyzes the transfer of a dimethylallyl group onto the adenine at position 37 in tRNAs that read codons beginning with uridine, leading to the formation of N6-(dimethylallyl)adenosine (i(6)A). The chain is tRNA dimethylallyltransferase from Kocuria rhizophila (strain ATCC 9341 / DSM 348 / NBRC 103217 / DC2201).